The primary structure comprises 593 residues: V-type sodium ATPase catalytic subunit A (593 aa).

232 to 239 (GPFGAGKT) serves as a coordination point for ATP.

The protein belongs to the ATPase alpha/beta chains family.

It catalyses the reaction 4 Na(+)(in) + ATP + H2O = 4 Na(+)(out) + ADP + phosphate + H(+). Its function is as follows. Involved in ATP-driven sodium extrusion. The polypeptide is V-type sodium ATPase catalytic subunit A (ntpA) (Enterococcus hirae (strain ATCC 9790 / DSM 20160 / JCM 8729 / LMG 6399 / NBRC 3181 / NCIMB 6459 / NCDO 1258 / NCTC 12367 / WDCM 00089 / R)).